A 26-amino-acid polypeptide reads, in one-letter code: GVPSVSTVNVAQKQHDVNFLLFKVYI.

The protein belongs to the tyrosinase family. Hemocyanin subfamily. In terms of tissue distribution, hemolymph.

It is found in the secreted. The protein resides in the extracellular space. Hemocyanins are copper-containing oxygen carriers occurring freely dissolved in the hemolymph of many mollusks and arthropods. The protein is Hemocyanin subunit 3 of Homarus americanus (American lobster).